A 189-amino-acid polypeptide reads, in one-letter code: Glucose-6-phosphate isomerase (189 aa).

H88, H90, E97, and H136 together coordinate Fe cation.

The protein belongs to the archaeal-type GPI family. In terms of assembly, homodimer. Requires Fe cation as cofactor.

It is found in the cytoplasm. The catalysed reaction is alpha-D-glucose 6-phosphate = beta-D-fructose 6-phosphate. It participates in carbohydrate degradation; glycolysis; D-glyceraldehyde 3-phosphate and glycerone phosphate from D-glucose: step 2/4. Its activity is regulated as follows. Inhibited by mannose 6-phosphate, fructose 1-phosphate and fructose 1,6-bisphosphate. The sequence is that of Glucose-6-phosphate isomerase (pgiA) from Pyrococcus furiosus (strain ATCC 43587 / DSM 3638 / JCM 8422 / Vc1).